A 984-amino-acid polypeptide reads, in one-letter code: Vacuolar sorting protein 3 (984 aa).

The CNH domain occupies K21–D339. The CHCR repeat unit spans residues V663–P844.

This sequence belongs to the TRAP1 family. In terms of assembly, component of the class C core vacuole/endosome tethering (CORVET) complex. Their common core is composed of the class C Vps core proteins VPS11, VCL1, VPS18 and VPS33, which in CORVET further associates with VPS3. Interacts directly with VPS11. Binds to RABF2A and RABF2B.

It localises to the endosome membrane. The protein localises to the cytoplasm. Functionally, essential protein required during embryogenesis. Believed to act as a component of the putative class C core vacuole/endosome tethering (CORVET) endosomal tethering complexes. CORVET is required for vacuolar transport of SYP22. Involved in root development. Plays a role in vesicle-mediated protein trafficking of the endocytic membrane transport pathway. This is Vacuolar sorting protein 3 from Arabidopsis thaliana (Mouse-ear cress).